We begin with the raw amino-acid sequence, 152 residues long: SsrA-binding protein (152 aa).

The protein belongs to the SmpB family.

Its subcellular location is the cytoplasm. Functionally, required for rescue of stalled ribosomes mediated by trans-translation. Binds to transfer-messenger RNA (tmRNA), required for stable association of tmRNA with ribosomes. tmRNA and SmpB together mimic tRNA shape, replacing the anticodon stem-loop with SmpB. tmRNA is encoded by the ssrA gene; the 2 termini fold to resemble tRNA(Ala) and it encodes a 'tag peptide', a short internal open reading frame. During trans-translation Ala-aminoacylated tmRNA acts like a tRNA, entering the A-site of stalled ribosomes, displacing the stalled mRNA. The ribosome then switches to translate the ORF on the tmRNA; the nascent peptide is terminated with the 'tag peptide' encoded by the tmRNA and targeted for degradation. The ribosome is freed to recommence translation, which seems to be the essential function of trans-translation. This is SsrA-binding protein from Helicobacter pylori (strain Shi470).